The chain runs to 444 residues: Protein CLP1 homolog (444 aa).

ATP-binding positions include Glu-33, Lys-72, and 140-145 (DSGKST).

The protein belongs to the Clp1 family. Clp1 subfamily. As to quaternary structure, interacts with PCFS4 and SYM5. Forms a complex with cleavage and polyadenylation specificity factor (CPSF) subunits CPSF30, CPSF100, PCFS1, PCFS4, PCFS5, CPSF160 and FY.

The protein localises to the nucleus. Its function is as follows. Required for endonucleolytic cleavage during polyadenylation-dependent pre-mRNA 3'-end formation. Functions in gametophyte, embryo and postembryotic development. The protein is Protein CLP1 homolog (CLPS3) of Arabidopsis thaliana (Mouse-ear cress).